We begin with the raw amino-acid sequence, 98 residues long: NADH-ubiquinone oxidoreductase chain 4L (98 aa).

Transmembrane regions (helical) follow at residues 1 to 21 (MPII…GMLI), 29 to 49 (SLLC…LMAL), and 58 to 78 (IVPI…LALL).

Belongs to the complex I subunit 4L family. Core subunit of respiratory chain NADH dehydrogenase (Complex I) which is composed of 45 different subunits.

The protein localises to the mitochondrion inner membrane. It catalyses the reaction a ubiquinone + NADH + 5 H(+)(in) = a ubiquinol + NAD(+) + 4 H(+)(out). Its function is as follows. Core subunit of the mitochondrial membrane respiratory chain NADH dehydrogenase (Complex I) which catalyzes electron transfer from NADH through the respiratory chain, using ubiquinone as an electron acceptor. Part of the enzyme membrane arm which is embedded in the lipid bilayer and involved in proton translocation. This is NADH-ubiquinone oxidoreductase chain 4L (MT-ND4L) from Nasalis larvatus (Proboscis monkey).